A 210-amino-acid chain; its full sequence is Shikimate kinase (210 aa).

An ATP-binding site is contributed by 34–39; sequence GVGKSV. Ser-38 is a binding site for Mg(2+). Substrate is bound by residues Asp-56, Arg-80, and Gly-102. Arg-140 lines the ATP pocket. Arg-159 is a substrate binding site.

This sequence belongs to the shikimate kinase family. As to quaternary structure, monomer. Requires Mg(2+) as cofactor.

The protein resides in the cytoplasm. It catalyses the reaction shikimate + ATP = 3-phosphoshikimate + ADP + H(+). The protein operates within metabolic intermediate biosynthesis; chorismate biosynthesis; chorismate from D-erythrose 4-phosphate and phosphoenolpyruvate: step 5/7. In terms of biological role, catalyzes the specific phosphorylation of the 3-hydroxyl group of shikimic acid using ATP as a cosubstrate. The polypeptide is Shikimate kinase (Bartonella henselae (strain ATCC 49882 / DSM 28221 / CCUG 30454 / Houston 1) (Rochalimaea henselae)).